Consider the following 749-residue polypeptide: cGMP-dependent protein kinase egl-4 (749 aa).

A coiled-coil region spans residues 30–96 (EAHELQKLIP…LEQKAQSAAS (67 aa)). The interval 87 to 111 (LEQKAQSAASPGQPPSPSPRTDQLG) is disordered. 3',5'-cyclic GMP-binding positions include 234–237 (GELA), 244–245 (RT), Arg349, 358–361 (GERA), 368–369 (RT), and Tyr403. The 261-residue stretch at 438 to 698 (VKRLATLGVG…VNDIRKHRWF (261 aa)) folds into the Protein kinase domain. Residues 444–452 (LGVGGFGRV) and Lys468 contribute to the ATP site. The Nuclear localization signal motif lies at 461 to 473 (KSKTYALKALKKK). The active-site Proton acceptor is Asp562. In terms of domain architecture, AGC-kinase C-terminal spans 699–749 (MGFDWEGLRTKTLKPPILPKVNNPADVTNFDNYPPDNDVPPDEFSGWDEGF). A disordered region spans residues 723-749 (ADVTNFDNYPPDNDVPPDEFSGWDEGF).

The protein belongs to the protein kinase superfamily. AGC Ser/Thr protein kinase family. cGMP subfamily. Requires Mg(2+) as cofactor. Autophosphorylated.

The protein localises to the cytoplasm. Its subcellular location is the nucleus. The catalysed reaction is L-seryl-[protein] + ATP = O-phospho-L-seryl-[protein] + ADP + H(+). The enzyme catalyses L-threonyl-[protein] + ATP = O-phospho-L-threonyl-[protein] + ADP + H(+). Binding of cGMP results in enzyme activation. Functionally, promotes chemoreceptor gene expression in response to increased cGMP levels by antagonizing the gene repression functions of the class II HDAC hda-4 and the mef-2 transcription factor. Regulates gene expression via recruitment of a histone deacetylase complex containing hda-2, saeg-1 and saeg-2. Represses body size and lifespan through the dbl-1 and insulin pathways, respectively. May also signal through daf-3 and/or daf-5. Role in egg-laying, dauer formation and motility. Regulates behavioral responses to various chemosensory stimuli in sensory neurons. Required for the initiation of long term adaptation to prolonged odor exposure which results in a decrease in odor seeking behavior. May regulate this process by phosphorylating tax-2, a subunit of cyclic nucleotide-gated channel tax-2/tax-4. In ASH sensory neurons, negatively regulates avoidance behavior to some bitter tastants, such as quinine, probably by phosphorylating rgs-2 and rgs-3 which are 2 regulator of G-protein signaling proteins. In AWB sensory neurons, involved in avoidance behavior to some repellent odors. In ASE left (ASEL) sensory neuron, involved in the sensing of environmental alkalinity downstream of receptor-type guanylate cyclase gcy-14. In sensory neurons, involved in the signaling pathway downstream of insulin, TGF-beta and receptor-type guanylate cyclase responsible for inducing quiescence after food intake. Might play a role in aversive olfactory learning in AWC neurons when an odor is associated with food deprivation, depending on the ins-1/age-1 signal from the AIA to the AWC neurons. Probably by regulating neuronal transmission downstream of lin-3 and receptor lin-23 and phospholipase plc-3 in ALA neurons, involved in the decrease in locomotion during the quiescent state that precedes each larval molt. This is cGMP-dependent protein kinase egl-4 from Caenorhabditis briggsae.